Consider the following 187-residue polypeptide: UPF0301 protein YqgE (187 aa).

Belongs to the UPF0301 (AlgH) family.

The protein is UPF0301 protein YqgE of Escherichia coli O139:H28 (strain E24377A / ETEC).